We begin with the raw amino-acid sequence, 91 residues long: MPRSLKKGPFIDLHLLKKIEVAAEKNDRKPVKTWSRRSMILPQMVGLTIAVHNGRQHVPVLVSEDMVGHKLGEFAGTRTYRGHVADKKAKR.

The protein belongs to the universal ribosomal protein uS19 family.

Protein S19 forms a complex with S13 that binds strongly to the 16S ribosomal RNA. The sequence is that of Small ribosomal subunit protein uS19 from Pseudomonas syringae pv. tomato (strain ATCC BAA-871 / DC3000).